Consider the following 116-residue polypeptide: Nucleoid-associated protein Tfu_0045 (116 aa).

The protein belongs to the YbaB/EbfC family. In terms of assembly, homodimer.

Its subcellular location is the cytoplasm. It is found in the nucleoid. Functionally, binds to DNA and alters its conformation. May be involved in regulation of gene expression, nucleoid organization and DNA protection. This is Nucleoid-associated protein Tfu_0045 from Thermobifida fusca (strain YX).